Reading from the N-terminus, the 177-residue chain is Interleukin-25 (177 aa).

The first 32 residues, 1 to 32 (MRERPRLGEDSSLISLFLQVVAFLAMVMGTHT), serve as a signal peptide directing secretion. A disordered region spans residues 58 to 81 (PVPPLEPARPNRHPESCRASEDGP). Residues 69 to 78 (RHPESCRASE) are compositionally biased toward basic and acidic residues. Cystine bridges form between Cys110/Cys168 and Cys115/Cys170. An N-linked (GlcNAc...) asparagine glycan is attached at Asn136.

Belongs to the IL-17 family. As to expression, expressed at low levels in several tissues, including brain, kidney, lung, prostate, testis, spinal cord, adrenal gland, and trachea.

The protein resides in the secreted. In terms of biological role, cytokine produced by various cells such as eosinophils, T-helper type 2 (Th2) cells or epithelial cells that plays a role in internal safety of adaptive immune responses by regulating cytokine production. Promotes and augments T-helper type 2 responses locally or systemically. Exerts its activity via its receptor composed of IL17RA and IL17RB for signal transduction. In turn, stimulates the JAK2-STAT5A pathway and promotes the secretion of type-2 associated cytokines including IL4, IL9 and IL13. Also induces the release of IL8, and IL6 from eosinophils through the combined activation of MAPK and NF-kappa-B pathways. Inhibits the differentiation of T-helper (Th17) cells via the production of IL4, IL5 and IL13. In Homo sapiens (Human), this protein is Interleukin-25 (IL25).